The sequence spans 349 residues: FK506-binding protein-like (349 aa).

Position 3 is a phosphothreonine (T3). Residues 36 to 55 (RQQPRDPPTETLELEVSPDP) are disordered. TPR repeat units follow at residues 210 to 243 (AREE…LLTL), 252 to 285 (TVLH…EPGH), and 286 to 319 (LKAL…DPKN).

In terms of assembly, forms a ternary complex with CDKN1A/p21 and HSP90AB1/Hsp90. As to expression, ubiquitously expressed with higher levels in testis.

In terms of biological role, may be involved in response to X-ray. Regulates p21 protein stability by binding to Hsp90 and p21. This is FK506-binding protein-like (FKBPL) from Homo sapiens (Human).